The chain runs to 209 residues: Neurotrophin-4 (209 aa).

Positions 1–21 are cleaved as a signal peptide; sequence MLPRHSCSLLLFLFLLPSVPM. The propeptide occupies 22–79; sequence EPHPPSSTLPPFLAPEWDLLSPRVALSRGAPAGPPLLFLLEAGAYGEPAGAPANRSRR. An N-linked (GlcNAc...) asparagine glycan is attached at Asn-75. Cystine bridges form between Cys-96–Cys-169, Cys-140–Cys-198, and Cys-157–Cys-200.

Belongs to the NGF-beta family.

The protein resides in the secreted. Functionally, target-derived survival factor for peripheral sensory sympathetic neurons. May promote ameloblast differentiation and subsequent reduction in proliferation of ameloblasts. The sequence is that of Neurotrophin-4 (Ntf4) from Mus musculus (Mouse).